An 82-amino-acid chain; its full sequence is 4-(gamma-L-glutamylamino)butanoyl-[BtrI acyl-carrier protein] monooxygenase BtrO (82 aa).

In terms of assembly, homotetramer.

The enzyme catalyses 4-(gamma-L-glutamylamino)butanoyl-[BtrI ACP] + FMNH2 + O2 = 4-(gamma-L-glutamylamino)-(2S)-2-hydroxybutanoyl-[BtrI ACP] + FMN + H2O + H(+). Its pathway is antibiotic biosynthesis; butirosin biosynthesis. Its function is as follows. NAD(P)H:FMN oxidoreductase component of a two-component system involved in the biosynthesis of the side chain of the aminoglycoside antibiotics in the biosynthetic pathway of butirosin. Together with BtrO, mediates hydroxylation of gamma-L-Glu-GABA-S-BtrI. The chain is 4-(gamma-L-glutamylamino)butanoyl-[BtrI acyl-carrier protein] monooxygenase BtrO (btrV) from Niallia circulans (Bacillus circulans).